A 161-amino-acid chain; its full sequence is 2-C-methyl-D-erythritol 2,4-cyclodiphosphate synthase (161 aa).

2 residues coordinate a divalent metal cation: aspartate 10 and histidine 12. Residues 10–12 and 36–37 each bind 4-CDP-2-C-methyl-D-erythritol 2-phosphate; these read DVH and HS. Histidine 44 is a binding site for a divalent metal cation. 4-CDP-2-C-methyl-D-erythritol 2-phosphate-binding positions include 58 to 60, 63 to 67, 102 to 108, 134 to 137, phenylalanine 141, and arginine 144; these read DIG, FPDTD, AQAPKMA, and TTTE.

This sequence belongs to the IspF family. As to quaternary structure, homotrimer. It depends on a divalent metal cation as a cofactor.

The catalysed reaction is 4-CDP-2-C-methyl-D-erythritol 2-phosphate = 2-C-methyl-D-erythritol 2,4-cyclic diphosphate + CMP. It participates in isoprenoid biosynthesis; isopentenyl diphosphate biosynthesis via DXP pathway; isopentenyl diphosphate from 1-deoxy-D-xylulose 5-phosphate: step 4/6. Its function is as follows. Involved in the biosynthesis of isopentenyl diphosphate (IPP) and dimethylallyl diphosphate (DMAPP), two major building blocks of isoprenoid compounds. Catalyzes the conversion of 4-diphosphocytidyl-2-C-methyl-D-erythritol 2-phosphate (CDP-ME2P) to 2-C-methyl-D-erythritol 2,4-cyclodiphosphate (ME-CPP) with a corresponding release of cytidine 5-monophosphate (CMP). This Shewanella baltica (strain OS155 / ATCC BAA-1091) protein is 2-C-methyl-D-erythritol 2,4-cyclodiphosphate synthase.